We begin with the raw amino-acid sequence, 135 residues long: Probable histone H2A.1 (135 aa).

The protein belongs to the histone H2A family. As to quaternary structure, the nucleosome is a histone octamer containing two molecules each of H2A, H2B, H3 and H4 assembled in one H3-H4 heterotetramer and two H2A-H2B heterodimers. The octamer wraps approximately 147 bp of DNA.

The protein localises to the nucleus. The protein resides in the chromosome. Its function is as follows. Core component of nucleosome. Nucleosomes wrap and compact DNA into chromatin, limiting DNA accessibility to the cellular machineries which require DNA as a template. Histones thereby play a central role in transcription regulation, DNA repair, DNA replication and chromosomal stability. DNA accessibility is regulated via a complex set of post-translational modifications of histones, also called histone code, and nucleosome remodeling. The chain is Probable histone H2A.1 from Oryza sativa subsp. japonica (Rice).